The following is a 470-amino-acid chain: MKFLLILLLQATASGALPLNSSTSLEKNNVLFGERYLEKFYGLEINKLPVTKMKYSGNLMKEKIQEMQHFLGLKVTGQLDTSTLEMMHAPRCGVPDVHHFREMPGGPVWRKHYITYRINNYTPDMNREDVDYAIRKAFQVWSNVTPLKFSKINTGMADILVVFARGAHGDFHAFDGKGGILAHAFGPGSGIGGDAHFDEDEFWTTHSGGTNLFLTAVHEIGHSLGLGHSSDPKAVMFPTYKYVDINTFRLSADDIRGIQSLYGDPKENQRLPNPDNSEPALCDPNLSFDAVTTVGNKIFFFKDRFFWLKVSERPKTSVNLISSLWPTLPSGIEAAYEIEARNQVFLFKDDKYWLISNLRPEPNYPKSIHSFGFPNFVKKIDAAVFNPRFYRTYFFVDNQYWRYDERRQMMDPGYPKLITKNFQGIGPKIDAVFYSKNKYYYFFQGSNQFEYDFLLQRITKTLKSNSWFGC.

A signal peptide spans 1 to 16; that stretch reads MKFLLILLLQATASGA. Positions 17 to 105 are cleaved as a propeptide — activation peptide; the sequence is LPLNSSTSLE…DVHHFREMPG (89 aa). Residue Asn20 is glycosylated (N-linked (GlcNAc...) asparagine). The Cysteine switch signature appears at 90–97; it reads PRCGVPDV. Cys92 contributes to the Zn(2+) binding site. 2 residues coordinate Ca(2+): Asp124 and Asp158. Zn(2+) contacts are provided by His168 and Asp170. Ca(2+)-binding residues include Asp175, Gly176, Gly178, and Ile180. His183 lines the Zn(2+) pocket. Ca(2+)-binding residues include Gly190, Gly192, and Asp194. His196 contacts Zn(2+). Ca(2+) contacts are provided by Asp198, Glu199, and Glu201. Zn(2+) is bound at residue His218. Glu219 is an active-site residue. 2 residues coordinate Zn(2+): His222 and His228. Hemopexin repeat units follow at residues 279-328, 329-375, 377-425, and 426-470; these read PALC…WPTL, PSGI…GFPN, VKKI…FQGI, and GPKI…WFGC. A disulfide bridge links Cys282 with Cys470. An N-linked (GlcNAc...) asparagine glycan is attached at Asn285. Ca(2+)-binding residues include Asp289, Glu333, Asp381, and Asp430.

It belongs to the peptidase M10A family. It depends on Ca(2+) as a cofactor. The cofactor is Zn(2+). In terms of tissue distribution, found in alveolar macrophages but not in peripheral blood monocytes.

The protein localises to the secreted. It localises to the extracellular space. It is found in the extracellular matrix. The catalysed reaction is Hydrolysis of soluble and insoluble elastin. Specific cleavages are also produced at 14-Ala-|-Leu-15 and 16-Tyr-|-Leu-17 in the B chain of insulin.. May be involved in tissue injury and remodeling. Has significant elastolytic activity. Can accept large and small amino acids at the P1' site, but has a preference for leucine. Aromatic or hydrophobic residues are preferred at the P1 site, with small hydrophobic residues (preferably alanine) occupying P3. This chain is Macrophage metalloelastase (MMP12), found in Homo sapiens (Human).